The sequence spans 128 residues: Phosphoribosyl-AMP cyclohydrolase (128 aa).

Position 77 (Asp-77) interacts with Mg(2+). Cys-78 contributes to the Zn(2+) binding site. Mg(2+) contacts are provided by Asp-79 and Asp-81. Cys-94 and Cys-101 together coordinate Zn(2+).

The protein belongs to the PRA-CH family. In terms of assembly, homodimer. Mg(2+) is required as a cofactor. Requires Zn(2+) as cofactor.

The protein localises to the cytoplasm. It catalyses the reaction 1-(5-phospho-beta-D-ribosyl)-5'-AMP + H2O = 1-(5-phospho-beta-D-ribosyl)-5-[(5-phospho-beta-D-ribosylamino)methylideneamino]imidazole-4-carboxamide. The protein operates within amino-acid biosynthesis; L-histidine biosynthesis; L-histidine from 5-phospho-alpha-D-ribose 1-diphosphate: step 3/9. Its function is as follows. Catalyzes the hydrolysis of the adenine ring of phosphoribosyl-AMP. The sequence is that of Phosphoribosyl-AMP cyclohydrolase from Granulibacter bethesdensis (strain ATCC BAA-1260 / CGDNIH1).